We begin with the raw amino-acid sequence, 207 residues long: ATP-dependent Clp protease proteolytic subunit (207 aa).

The propeptide occupies 1 to 14; the sequence is MSYSGERDNLAPHM. Residue serine 111 is the Nucleophile of the active site. Histidine 136 is an active-site residue.

The protein belongs to the peptidase S14 family. Fourteen ClpP subunits assemble into 2 heptameric rings which stack back to back to give a disk-like structure with a central cavity, resembling the structure of eukaryotic proteasomes. Component of the ClpAP and ClpXP complexes.

The protein resides in the cytoplasm. It carries out the reaction Hydrolysis of proteins to small peptides in the presence of ATP and magnesium. alpha-casein is the usual test substrate. In the absence of ATP, only oligopeptides shorter than five residues are hydrolyzed (such as succinyl-Leu-Tyr-|-NHMec, and Leu-Tyr-Leu-|-Tyr-Trp, in which cleavage of the -Tyr-|-Leu- and -Tyr-|-Trp bonds also occurs).. Its function is as follows. Cleaves peptides in various proteins in a process that requires ATP hydrolysis. Has a chymotrypsin-like activity. Plays a major role in the degradation of misfolded proteins. The sequence is that of ATP-dependent Clp protease proteolytic subunit from Salmonella paratyphi A (strain ATCC 9150 / SARB42).